Reading from the N-terminus, the 679-residue chain is WD repeat-containing protein 48 homolog (679 aa).

WD repeat units lie at residues 26–65 (QHRN…NEKY), 71–110 (HHND…CMST), 113–152 (THRD…ALTA), 164–203 (GSKD…RSMK), 206–245 (GHTE…CIQT), 248–287 (VHKE…NKML), 290–329 (EEKA…RCVL), and 349–388 (KGGA…KKEE). A disordered region spans residues 594–615 (PSAGNANNSLQNSQSDANSEGS).

The protein belongs to the WD repeat WDR48 family. Catalytic component of the Usp12-46 deubiquitylase complex consisting of Usp12-46, Wdr20 and Uaf1; regulatory subunit that, together wtih Wdr20, stabilizes Usp12-46. The Usp12-46 deubiquitylase complex associates with arr/arrow; the interaction leads to deubiquitination and stabilization of arr/arrow.

In terms of biological role, regulatory component of the Usp12-46 deubiquitylase complex. activates deubiquitination by increasing the catalytic turnover without increasing the affinity of deubiquitinating enzymes for the substrate. The complex deubiquitylates the wg/wingless-signaling receptor arr/arrow, which stabilizes the receptor and increases its concentration at the cell surface; this enhances the sensitivity of cells to wg/wingless-signal stimulation. This increases the amplitude and spatial range of the signaling response to the wg/wingless morphogen gradient, facilitating the precise concentration-dependent regulation of its target genes. Together with Wdr20 and Usp12-46 required for wg/wingless-mediated signaling in the wing imaginal disc and for wg/wingless-dependent regulation of intestinal stem cell proliferation. This is WD repeat-containing protein 48 homolog from Drosophila mojavensis (Fruit fly).